The sequence spans 478 residues: Glutamine synthetase (478 aa).

Lys-14 is covalently cross-linked (Isoglutamyl lysine isopeptide (Lys-Gln) (interchain with Q-Cter in protein Pup)). One can recognise a GS beta-grasp domain in the interval 16–100; that stretch reads ENVEYVDIRF…MNFFVHDPFT (85 aa). Residues 108–478 form the GS catalytic domain; it reads PRNVARKAEN…PYEFSLYYDV (371 aa). Residues Glu-133 and Glu-135 each contribute to the Mg(2+) site. Position 214 (Glu-214) interacts with ATP. 2 residues coordinate Mg(2+): Glu-219 and Glu-227. 230–232 is a binding site for ATP; the sequence is YKF. Residues 271 to 272 and Gly-272 each bind L-glutamate; that span reads NG. His-276 contacts Mg(2+). ATP contacts are provided by residues 278 to 280 and Ser-280; that span reads HQS. The L-glutamate site is built by Arg-329, Glu-335, and Arg-347. ATP is bound by residues Arg-347, Arg-352, and Lys-361. Residue Glu-366 coordinates Mg(2+). Arg-368 is a binding site for L-glutamate. Residue Tyr-406 is modified to O-AMP-tyrosine.

The protein belongs to the glutamine synthetase family. In terms of assembly, oligomer of 12 subunits arranged in the form of two hexagons. The cofactor is Mg(2+).

The protein localises to the cytoplasm. It carries out the reaction L-glutamate + NH4(+) + ATP = L-glutamine + ADP + phosphate + H(+). When cellular nitrogen levels are high, the C-terminal adenylyl transferase (AT) of GlnE inhibits GlnA by covalent transfer of an adenylyl group from ATP to Tyr-406. Conversely, when nitrogen levels are low, the N-terminal adenylyl removase (AR) of GlnE activates GlnA by removing the adenylyl group by phosphorolysis. The fully adenylated enzyme complex is inactive. Its function is as follows. Involved in nitrogen metabolism via ammonium assimilation. Catalyzes the ATP-dependent biosynthesis of glutamine from glutamate and ammonia. The sequence is that of Glutamine synthetase from Mycolicibacterium smegmatis (strain ATCC 700084 / mc(2)155) (Mycobacterium smegmatis).